A 174-amino-acid chain; its full sequence is Peptidyl-prolyl cis-trans isomerase D, mitochondrial (174 aa).

Positions 10-173 (FFQIKQGNTP…AACVIEDCGQ (164 aa)) constitute a PPIase cyclophilin-type domain.

It belongs to the cyclophilin-type PPIase family. PPIase D subfamily.

It localises to the mitochondrion. It carries out the reaction [protein]-peptidylproline (omega=180) = [protein]-peptidylproline (omega=0). Its activity is regulated as follows. Binds cyclosporin A (CsA). CsA mediates some of its effects via an inhibitory action on PPIase. Functionally, PPIases accelerate the folding of proteins. It catalyzes the cis-trans isomerization of proline imidic peptide bonds in oligopeptides. The chain is Peptidyl-prolyl cis-trans isomerase D, mitochondrial (cypD) from Dictyostelium discoideum (Social amoeba).